Consider the following 300-residue polypeptide: MQNNFHSGFVAILGRPNVGKSTFLNRVVGQKIAIMSDKAQTTRNKIQGIYTEDDAQIVFIDTPGIHKPHSRLGDFMVESALSTLNEVDAVLFMVNATQKRGRGDDFIIERLKNVKKPIYLVINKIDQIHPDKLLQIMDDYRNTLDYAEVFPISALEGNNCPELIESLVNTLPEGPQYYPADQITDHPERFIAGELIREKVLELTREEVPHSVAVVVDRIHREDAEKVLVQATIVVERNSQKGIIIGKGGKMLKQIGVKARKDIELMLGDKVYLELWVKVQPNWKDRQVDLQALGYKQDDY.

Positions 6 to 173 constitute an Era-type G domain; that stretch reads HSGFVAILGR…IESLVNTLPE (168 aa). Positions 14 to 21 are G1; the sequence is GRPNVGKS. 14-21 lines the GTP pocket; sequence GRPNVGKS. The interval 40–44 is G2; sequence QTTRN. Positions 61 to 64 are G3; sequence DTPG. Residues 61-65 and 123-126 each bind GTP; these read DTPGI and NKID. Residues 123 to 126 form a G4 region; the sequence is NKID. A G5 region spans residues 152-154; it reads ISA. The KH type-2 domain occupies 204–281; it reads TREEVPHSVA…YLELWVKVQP (78 aa).

It belongs to the TRAFAC class TrmE-Era-EngA-EngB-Septin-like GTPase superfamily. Era GTPase family. In terms of assembly, monomer.

The protein resides in the cytoplasm. Its subcellular location is the cell membrane. Its function is as follows. An essential GTPase that binds both GDP and GTP, with rapid nucleotide exchange. Plays a role in 16S rRNA processing and 30S ribosomal subunit biogenesis and possibly also in cell cycle regulation and energy metabolism. This Ligilactobacillus salivarius (strain UCC118) (Lactobacillus salivarius) protein is GTPase Era.